Consider the following 374-residue polypeptide: Pectate lyase 1 (374 aa).

Residues 1 to 22 form the signal peptide; sequence MKYLLPSAAAGLLLLAAQPTMA. The cysteines at positions 93 and 176 are disulfide-linked. Positions 150, 152, 187, and 191 each coordinate Ca(2+). Residue Arg-239 is part of the active site. Cys-350 and Cys-373 form a disulfide bridge.

The protein belongs to the polysaccharide lyase 1 family. PLADES subfamily. Ca(2+) serves as cofactor.

The protein localises to the secreted. The catalysed reaction is Eliminative cleavage of (1-&gt;4)-alpha-D-galacturonan to give oligosaccharides with 4-deoxy-alpha-D-galact-4-enuronosyl groups at their non-reducing ends.. The protein operates within glycan metabolism; pectin degradation; 2-dehydro-3-deoxy-D-gluconate from pectin: step 2/5. Functionally, involved in maceration and soft-rotting of plant tissue. The protein is Pectate lyase 1 (pel1) of Pectobacterium atrosepticum (strain SCRI 1043 / ATCC BAA-672) (Erwinia carotovora subsp. atroseptica).